We begin with the raw amino-acid sequence, 386 residues long: ATP phosphoribosyltransferase regulatory subunit (386 aa).

This sequence belongs to the class-II aminoacyl-tRNA synthetase family. HisZ subfamily. In terms of assembly, heteromultimer composed of HisG and HisZ subunits.

It is found in the cytoplasm. It functions in the pathway amino-acid biosynthesis; L-histidine biosynthesis; L-histidine from 5-phospho-alpha-D-ribose 1-diphosphate: step 1/9. Required for the first step of histidine biosynthesis. May allow the feedback regulation of ATP phosphoribosyltransferase activity by histidine. The chain is ATP phosphoribosyltransferase regulatory subunit from Limosilactobacillus fermentum (strain NBRC 3956 / LMG 18251) (Lactobacillus fermentum).